A 426-amino-acid chain; its full sequence is Serine--tRNA ligase (426 aa).

L-serine is bound at residue 233 to 235 (TAE). 264-266 (RSE) is a binding site for ATP. Glu287 is a binding site for L-serine. Position 351–354 (351–354 (EISS)) interacts with ATP. Ser387 lines the L-serine pocket.

The protein belongs to the class-II aminoacyl-tRNA synthetase family. Type-1 seryl-tRNA synthetase subfamily. As to quaternary structure, homodimer. The tRNA molecule binds across the dimer.

It localises to the cytoplasm. It catalyses the reaction tRNA(Ser) + L-serine + ATP = L-seryl-tRNA(Ser) + AMP + diphosphate + H(+). It carries out the reaction tRNA(Sec) + L-serine + ATP = L-seryl-tRNA(Sec) + AMP + diphosphate + H(+). Its pathway is aminoacyl-tRNA biosynthesis; selenocysteinyl-tRNA(Sec) biosynthesis; L-seryl-tRNA(Sec) from L-serine and tRNA(Sec): step 1/1. In terms of biological role, catalyzes the attachment of serine to tRNA(Ser). Is also able to aminoacylate tRNA(Sec) with serine, to form the misacylated tRNA L-seryl-tRNA(Sec), which will be further converted into selenocysteinyl-tRNA(Sec). The sequence is that of Serine--tRNA ligase from Ectopseudomonas mendocina (strain ymp) (Pseudomonas mendocina).